A 347-amino-acid chain; its full sequence is 5-formaminoimidazole-4-carboxamide-1-(beta)-D-ribofuranosyl 5'-monophosphate synthetase (347 aa).

5-amino-1-(5-phospho-beta-D-ribosyl)imidazole-4-carboxamide-binding residues include His23 and Ser91. The ATP-grasp domain occupies 112–323; sequence RKILLWESDQ…YSYLYWDEPM (212 aa). ATP contacts are provided by residues 142–196 and Glu218; that span reads PDEV…VPAY. Asn244 contacts 5-amino-1-(5-phospho-beta-D-ribosyl)imidazole-4-carboxamide. Mg(2+) contacts are provided by Glu283 and Glu296.

The protein belongs to the phosphohexose mutase family. It depends on Mg(2+) as a cofactor. Requires Mn(2+) as cofactor.

It catalyses the reaction 5-amino-1-(5-phospho-beta-D-ribosyl)imidazole-4-carboxamide + formate + ATP = 5-formamido-1-(5-phospho-D-ribosyl)imidazole-4-carboxamide + ADP + phosphate. It functions in the pathway purine metabolism; IMP biosynthesis via de novo pathway; 5-formamido-1-(5-phospho-D-ribosyl)imidazole-4-carboxamide from 5-amino-1-(5-phospho-D-ribosyl)imidazole-4-carboxamide (formate route): step 1/1. Functionally, catalyzes the ATP- and formate-dependent formylation of 5-aminoimidazole-4-carboxamide-1-beta-d-ribofuranosyl 5'-monophosphate (AICAR) to 5-formaminoimidazole-4-carboxamide-1-beta-d-ribofuranosyl 5'-monophosphate (FAICAR) in the absence of folates. The protein is 5-formaminoimidazole-4-carboxamide-1-(beta)-D-ribofuranosyl 5'-monophosphate synthetase of Ignicoccus hospitalis (strain KIN4/I / DSM 18386 / JCM 14125).